The sequence spans 396 residues: Beta-peptidyl aminopeptidase BapA (396 aa).

An N-terminal signal peptide occupies residues 1–21; it reads MHYLKFPAIIAGMLLAGAASA. Serine 271 (nucleophile) is an active-site residue. Catalysis depends on proton donor/acceptor residues serine 309 and aspartate 311.

Belongs to the peptidase S58 family. As to quaternary structure, heterooctamer of 4 heterodimers ((alpha:beta)4); each heterodimer is composed of an alpha subunit and a beta subunit processed from the same precursor. Autoproteolytic processing to generate the alpha and beta subunit is required for self-activation and is proposed to use a similar mechanism as substrate cleavage.

The protein resides in the periplasm. It catalyses the reaction Cleaves N-terminal beta-homoamino acids from peptides composed of 2 to 6 amino acids.. With respect to regulation, inhibited by AEBSF (4-(2-aminoethyl)benzenesulfonyl fluoride, Pefabloc SC). Functionally, beta-aminopeptidase that can cleave synthetic beta-peptides which consist of backbone-elongated beta-amino acid residues that are not processed by common proteolytic enzymes. Can cleave the beta-peptides beta-homoVal-beta-homoAla-beta-homoLeu and beta-homoAla-beta-homoLeu. Requires a beta-amino acid at the N-terminus of peptide substrates and cleaves the peptide bond between the N-terminal beta-amino acid and the amino acid at the second position of tripeptidic substrates of the general structure H-betahXaa-Ile-betahTyr-OH according to the following preferences with regard to the side chain of the N-terminal beta-amino acid: aliphatic and aromatic &gt; OH-containing &gt; hydrogen, basic and polar. beta-homoVal-beta-homoAla-beta-homoLeu and beta-homoAla-beta-homoLeu. This Sphingosinicella microcystinivorans protein is Beta-peptidyl aminopeptidase BapA.